A 461-amino-acid chain; its full sequence is Probable tubulin polyglutamylase TTLL9 (461 aa).

The segment at 1-21 (MSRPKNQNYKGHGLQKGKERE) is disordered. The TTL domain occupies 22 to 402 (QRASIRFKTT…EARLTGREKR (381 aa)). ATP contacts are provided by residues K149 and 155–156 (QG). Residue Q155 participates in a protein binding. The tract at residues 182–208 (SLEAQPARNTVNPSGSHDTRSSDDQKD) is disordered. The segment covering 188-197 (ARNTVNPSGS) has biased composition (polar residues). A compositionally biased stretch (basic and acidic residues) spans 198–208 (HDTRSSDDQKD). ATP is bound by residues 218–221 (QRYI) and 231–233 (KFD). R257 serves as a coordination point for L-glutamate. 276–277 (TN) serves as a coordination point for ATP. K294 is a binding site for L-glutamate. 3 residues coordinate Mg(2+): D348, E361, and N363. K379 is a binding site for L-glutamate.

The protein belongs to the tubulin--tyrosine ligase family. It depends on Mg(2+) as a cofactor.

It is found in the cytoplasm. The protein localises to the cytoskeleton. It localises to the cilium basal body. The protein resides in the flagellum axoneme. It catalyses the reaction (L-glutamyl)(n)-gamma-L-glutamyl-L-glutamyl-[protein] + L-glutamate + ATP = (L-glutamyl)(n+1)-gamma-L-glutamyl-L-glutamyl-[protein] + ADP + phosphate + H(+). In terms of biological role, probable tubulin polyglutamylase that generates side chains of glutamate on the gamma-carboxyl group of specific glutamate residues within the C-terminal tail of target proteins. Similar to TTLL1, may acquire enzymatic activity only in complex with other proteins as it is most likely lacking domains important for autonomous activity. Mediates tubulin polyglutamylation which induces establishment of microtubule heterogeneity in sperm flagella, thereby playing a role in normal motile flagella axoneme structure and sperm flagella beating pattern. This Bos taurus (Bovine) protein is Probable tubulin polyglutamylase TTLL9 (TTLL9).